The sequence spans 131 residues: UPF0102 protein YraN (131 aa).

The span at 1–19 (MATVPTRSGSPRQLTTKQT) shows a compositional bias: polar residues. The interval 1–20 (MATVPTRSGSPRQLTTKQTG) is disordered.

This sequence belongs to the UPF0102 family.

The protein is UPF0102 protein YraN of Escherichia coli (strain 55989 / EAEC).